A 362-amino-acid polypeptide reads, in one-letter code: Chorismate synthase (362 aa).

R46 contributes to the NADP(+) binding site. Residues 122–124 (RSS), 238–239 (NA), G278, 293–297 (KPTPS), and R319 each bind FMN.

The protein belongs to the chorismate synthase family. In terms of assembly, homotetramer. FMNH2 serves as cofactor.

The catalysed reaction is 5-O-(1-carboxyvinyl)-3-phosphoshikimate = chorismate + phosphate. It participates in metabolic intermediate biosynthesis; chorismate biosynthesis; chorismate from D-erythrose 4-phosphate and phosphoenolpyruvate: step 7/7. Its function is as follows. Catalyzes the anti-1,4-elimination of the C-3 phosphate and the C-6 proR hydrogen from 5-enolpyruvylshikimate-3-phosphate (EPSP) to yield chorismate, which is the branch point compound that serves as the starting substrate for the three terminal pathways of aromatic amino acid biosynthesis. This reaction introduces a second double bond into the aromatic ring system. The polypeptide is Chorismate synthase (Campylobacter jejuni subsp. jejuni serotype O:6 (strain 81116 / NCTC 11828)).